The following is a 575-amino-acid chain: Chaperonin CPN60-2, mitochondrial (575 aa).

A mitochondrion-targeting transit peptide spans 1–32; sequence MHRFASGLASKARLARKGANQIASRSSWSRNY.

Belongs to the chaperonin (HSP60) family.

It localises to the mitochondrion. Implicated in mitochondrial protein import and macromolecular assembly. May facilitate the correct folding of imported proteins. May also prevent misfolding and promote the refolding and proper assembly of unfolded polypeptides generated under stress conditions in the mitochondrial matrix. This is Chaperonin CPN60-2, mitochondrial (CPN60-2) from Cucurbita maxima (Pumpkin).